The primary structure comprises 334 residues: Protein-methionine-sulfoxide reductase catalytic subunit MsrP (334 aa).

The segment at residues 1 to 44 is a signal peptide (tat-type signal); the sequence is MKKNQFLKESDVTAESVFFMKRRQVLKALGISAAAFSLPHAAHA. Residues Asn-88, 91 to 92, Cys-146, Thr-181, Asn-233, Arg-238, and 249 to 251 each bind Mo-molybdopterin; these read YE and GIK.

This sequence belongs to the MsrP family. In terms of assembly, heterodimer of a catalytic subunit (MsrP) and a heme-binding subunit (MsrQ). It depends on Mo-molybdopterin as a cofactor. Post-translationally, predicted to be exported by the Tat system. The position of the signal peptide cleavage has not been experimentally proven.

The protein localises to the periplasm. It catalyses the reaction L-methionyl-[protein] + a quinone + H2O = L-methionyl-(S)-S-oxide-[protein] + a quinol. It carries out the reaction L-methionyl-[protein] + a quinone + H2O = L-methionyl-(R)-S-oxide-[protein] + a quinol. In terms of biological role, part of the MsrPQ system that repairs oxidized periplasmic proteins containing methionine sulfoxide residues (Met-O), using respiratory chain electrons. Thus protects these proteins from oxidative-stress damage caused by reactive species of oxygen and chlorine generated by the host defense mechanisms. MsrPQ is essential for the maintenance of envelope integrity under bleach stress, rescuing a wide series of structurally unrelated periplasmic proteins from methionine oxidation, including the primary periplasmic chaperone SurA and the lipoprotein Pal. The catalytic subunit MsrP is non-stereospecific, being able to reduce both (R-) and (S-) diastereoisomers of methionine sulfoxide. This chain is Protein-methionine-sulfoxide reductase catalytic subunit MsrP, found in Escherichia coli O6:H1 (strain CFT073 / ATCC 700928 / UPEC).